Reading from the N-terminus, the 608-residue chain is Glutamine--fructose-6-phosphate aminotransferase [isomerizing] (608 aa).

C2 acts as the Nucleophile; for GATase activity in catalysis. Residues 2-217 (CGIVGIVGHK…DGDWAVVGKT (216 aa)) enclose the Glutamine amidotransferase type-2 domain. SIS domains are found at residues 283 to 422 (TDID…ARGT) and 456 to 598 (LSRE…VDQP). The For Fru-6P isomerization activity role is filled by K603.

It is found in the cytoplasm. It carries out the reaction D-fructose 6-phosphate + L-glutamine = D-glucosamine 6-phosphate + L-glutamate. Involved in the production of the root hair deformation (HAD) factor specifically on medicago. This is Glutamine--fructose-6-phosphate aminotransferase [isomerizing] (nodM) from Rhizobium leguminosarum bv. viciae.